The chain runs to 395 residues: Flap endonuclease 1 (395 aa).

The tract at residues 1 to 108 (MGILGLSKLL…DELETRRQKA (108 aa)) is N-domain. Asp-34 lines the Mg(2+) pocket. Position 74 (Arg-74) interacts with DNA. Asp-90, Glu-162, Glu-164, Asp-183, and Asp-185 together coordinate Mg(2+). The interval 126-257 (MMEKMSKRTV…QRAWEGIQRY (132 aa)) is I-domain. Residue Glu-162 participates in DNA binding. The DNA site is built by Gly-235 and Asp-237. Asp-237 is a binding site for Mg(2+). Residues 340-348 (TQGRLDNFF) form an interaction with PCNA region.

The protein belongs to the XPG/RAD2 endonuclease family. FEN1 subfamily. Interacts with PCNA. Three molecules of FEN1 bind to one PCNA trimer with each molecule binding to one PCNA monomer. PCNA stimulates the nuclease activity without altering cleavage specificity. The cofactor is Mg(2+). In terms of processing, phosphorylated. Phosphorylation upon DNA damage induces relocalization to the nuclear plasma.

The protein resides in the nucleus. It localises to the nucleolus. The protein localises to the nucleoplasm. It is found in the mitochondrion. Structure-specific nuclease with 5'-flap endonuclease and 5'-3' exonuclease activities involved in DNA replication and repair. During DNA replication, cleaves the 5'-overhanging flap structure that is generated by displacement synthesis when DNA polymerase encounters the 5'-end of a downstream Okazaki fragment. It enters the flap from the 5'-end and then tracks to cleave the flap base, leaving a nick for ligation. Also involved in the long patch base excision repair (LP-BER) pathway, by cleaving within the apurinic/apyrimidinic (AP) site-terminated flap. Acts as a genome stabilization factor that prevents flaps from equilibrating into structures that lead to duplications and deletions. Also possesses 5'-3' exonuclease activity on nicked or gapped double-stranded DNA, and exhibits RNase H activity. Also involved in replication and repair of rDNA and in repairing mitochondrial DNA. In Leishmania braziliensis, this protein is Flap endonuclease 1.